We begin with the raw amino-acid sequence, 289 residues long: Protein charybde (289 aa).

A disordered region spans residues 119 to 142 (TAHHPGHGHGPGPSPMPASPLQST).

Belongs to the DDIT4 family.

It localises to the cytoplasm. In terms of biological role, inhibits cell growth by regulating the Tor pathway upstream of the Tsc1-Tsc2 complex and downstream of Akt1. Acts as a cell death activator during head development. The polypeptide is Protein charybde (chrb) (Drosophila pseudoobscura pseudoobscura (Fruit fly)).